A 221-amino-acid polypeptide reads, in one-letter code: Cysteine-rich venom protein (221 aa).

G1 is a signal peptide. The 128-residue stretch at 21 to 148 (DLHNSLRRSV…EYKYFYVCQY (128 aa)) folds into the SCP domain. 8 cysteine pairs are disulfide-bonded: C57/C135, C74/C149, C130/C146, C168/C175, C171/C180, C184/C216, C193/C210, and C201/C214. The ShKT domain occupies 184–216 (CTHEDKFTNCKDLVKQGCNNNYLKTNCPASCSC).

Belongs to the CRISP family. In terms of tissue distribution, expressed by the venom gland.

The protein resides in the secreted. In terms of biological role, blocks contraction of smooth muscle elicited by high potassium-induced depolarization, but does not block caffeine-stimulated contraction. May target voltage-gated calcium channels in smooth muscle. This is Cysteine-rich venom protein from Vipera nikolskii (Nikolsky's adder).